The following is a 508-amino-acid chain: Photosystem II CP47 reaction center protein (508 aa).

A run of 6 helical transmembrane segments spans residues 21-36, 101-115, 140-156, 203-218, 237-252, and 457-472; these read SVHI…WAGS, IVFS…IWHW, GIHL…FGAF, IAAG…FHLS, VLSS…AFVV, and SFAL…HGAR.

The protein belongs to the PsbB/PsbC family. PsbB subfamily. As to quaternary structure, PSII is composed of 1 copy each of membrane proteins PsbA, PsbB, PsbC, PsbD, PsbE, PsbF, PsbH, PsbI, PsbJ, PsbK, PsbL, PsbM, PsbT, PsbX, PsbY, PsbZ, Psb30/Ycf12, at least 3 peripheral proteins of the oxygen-evolving complex and a large number of cofactors. It forms dimeric complexes. The cofactor is Binds multiple chlorophylls. PSII binds additional chlorophylls, carotenoids and specific lipids..

It is found in the plastid. The protein resides in the chloroplast thylakoid membrane. In terms of biological role, one of the components of the core complex of photosystem II (PSII). It binds chlorophyll and helps catalyze the primary light-induced photochemical processes of PSII. PSII is a light-driven water:plastoquinone oxidoreductase, using light energy to abstract electrons from H(2)O, generating O(2) and a proton gradient subsequently used for ATP formation. In Platanus occidentalis (Sycamore), this protein is Photosystem II CP47 reaction center protein.